Consider the following 635-residue polypeptide: Threonine--tRNA ligase (635 aa).

Residues 1–58 form the TGS domain; sequence MIRVICNNETVELPKGATAADFASKIKNSHYFAGVVINDQIKDLSTTLNEGDTLRFVT. Residues 237-528 are catalytic; that stretch reads DHRVLGAKLD…LIEHFKGKFP (292 aa). The Zn(2+) site is built by Cys328, His379, and His505.

The protein belongs to the class-II aminoacyl-tRNA synthetase family. In terms of assembly, homodimer. The cofactor is Zn(2+).

Its subcellular location is the cytoplasm. It carries out the reaction tRNA(Thr) + L-threonine + ATP = L-threonyl-tRNA(Thr) + AMP + diphosphate + H(+). In terms of biological role, catalyzes the attachment of threonine to tRNA(Thr) in a two-step reaction: L-threonine is first activated by ATP to form Thr-AMP and then transferred to the acceptor end of tRNA(Thr). Also edits incorrectly charged L-seryl-tRNA(Thr). This Chlamydia caviae (strain ATCC VR-813 / DSM 19441 / 03DC25 / GPIC) (Chlamydophila caviae) protein is Threonine--tRNA ligase.